The sequence spans 202 residues: Transmembrane 4 L6 family member 1 (202 aa).

At 1 to 9 (MCYVKCARY) the chain is on the cytoplasmic side. A helical transmembrane segment spans residues 10–30 (IGYSLVWAAVFCIVANALLYF). The Extracellular portion of the chain corresponds to 31–49 (PNGETKYATEDHLSRFVWY). A helical transmembrane segment spans residues 50–70 (FAGIVGGGLLMLLPAFVFIGM). Over 71–93 (DEEDCCGCCGYENYGKRCSMLSS) the chain is Cytoplasmic. The helical transmembrane segment at 94–114 (VLAALIGIVGSAYCVIVASLG) threads the bilayer. At 115–161 (LAEGPKCSDAHGVWNYTFASTEGQYLLNSSMWSKCYEPKHIVEWHVT) the chain is on the extracellular side. N-linked (GlcNAc...) asparagine glycans are attached at residues asparagine 129 and asparagine 142. The helical transmembrane segment at 162–182 (LFSILLAFAAVEFILCLIQVI) threads the bilayer. The Cytoplasmic portion of the chain corresponds to 183-202 (NGMLGGLCGYCCSRQQQYNC).

It belongs to the L6 tetraspanin family. In terms of assembly, present in high molecular weight complexes in tumor cells. Interacts with SDCBP2. As to expression, highly expressed in skin and lung. Moderately expressed in lymph nodes and kidneys. Also present in thymic stroma and fibroblasts.

The protein resides in the membrane. This chain is Transmembrane 4 L6 family member 1 (Tm4sf1), found in Mus musculus (Mouse).